The sequence spans 685 residues: Methionine--tRNA ligase (685 aa).

A 'HIGH' region motif is present at residues 15 to 25 (PYANGPIHLGH). Zn(2+) contacts are provided by Cys146, Cys149, Cys159, and Cys162. A 'KMSKS' region motif is present at residues 331–335 (KMSKS). ATP is bound at residue Lys334. The tRNA-binding domain maps to 583–685 (DFAKMDLRVA…AGVKAGSRVK (103 aa)).

Belongs to the class-I aminoacyl-tRNA synthetase family. MetG type 1 subfamily. As to quaternary structure, homodimer. The cofactor is Zn(2+).

The protein resides in the cytoplasm. The enzyme catalyses tRNA(Met) + L-methionine + ATP = L-methionyl-tRNA(Met) + AMP + diphosphate. Functionally, is required not only for elongation of protein synthesis but also for the initiation of all mRNA translation through initiator tRNA(fMet) aminoacylation. This is Methionine--tRNA ligase from Actinobacillus succinogenes (strain ATCC 55618 / DSM 22257 / CCUG 43843 / 130Z).